Here is a 560-residue protein sequence, read N- to C-terminus: Serine palmitoyltransferase 2 (560 aa).

A helical transmembrane segment spans residues 65-85; sequence PMLVAVLTYVGYGVLTLFGYL. Lysine 377 carries the N6-(pyridoxal phosphate)lysine modification.

The protein belongs to the class-II pyridoxal-phosphate-dependent aminotransferase family. As to quaternary structure, component of the serine palmitoyltransferase (SPT) complex, which is composed of SPTLC1, SPTLC2 or SPTLC3 and SPTSSA or SPTSSB. The heterodimer consisting of SPTLC1 and SPTLC2/SPTLC3 forms the catalytic core of the enzyme, while SPTSSA or SPTSSB subunits determine substrate specificity. SPT also interacts with ORMDL proteins, especially ORMDL3, which negatively regulate SPT activity in the presence of ceramides. Forms dimers of heterodimers with SPTLC1. It depends on pyridoxal 5'-phosphate as a cofactor.

The protein resides in the endoplasmic reticulum membrane. The catalysed reaction is L-serine + hexadecanoyl-CoA + H(+) = 3-oxosphinganine + CO2 + CoA. It carries out the reaction octadecanoyl-CoA + L-serine + H(+) = 3-oxoeicosasphinganine + CO2 + CoA. Its pathway is lipid metabolism; sphingolipid metabolism. With respect to regulation, SPT complex catalytic activity is negatively regulated by ORMDL proteins, including ORMDL3, in the presence of ceramides. This mechanism allows to maintain ceramide levels at sufficient concentrations for the production of complex sphingolipids, but which prevents the accumulation of ceramides to levels that trigger apoptosis. In terms of biological role, component of the serine palmitoyltransferase multisubunit enzyme (SPT) that catalyzes the initial and rate-limiting step in sphingolipid biosynthesis by condensing L-serine and activated acyl-CoA (most commonly palmitoyl-CoA) to form long-chain bases. The SPT complex is composed of SPTLC1, SPTLC2 or SPTLC3 and SPTSSA or SPTSSB. Within this complex, the heterodimer consisting of SPTLC1 and SPTLC2/SPTLC3 forms the catalytic core. The composition of the serine palmitoyltransferase (SPT) complex determines the substrate preference. The SPTLC1-SPTLC2-SPTSSA complex shows a strong preference for C16-CoA substrate, while the SPTLC1-SPTLC3-SPTSSA isozyme uses both C14-CoA and C16-CoA as substrates, with a slight preference for C14-CoA. The SPTLC1-SPTLC2-SPTSSB complex shows a strong preference for C18-CoA substrate, while the SPTLC1-SPTLC3-SPTSSB isozyme displays an ability to use a broader range of acyl-CoAs, without apparent preference. Crucial for adipogenesis. This chain is Serine palmitoyltransferase 2 (SPTLC2), found in Cricetulus griseus (Chinese hamster).